The chain runs to 314 residues: Acetaldehyde dehydrogenase 2 (314 aa).

An NAD(+)-binding site is contributed by 15 to 18 (SGNI). C133 (acyl-thioester intermediate) is an active-site residue. NAD(+)-binding positions include 164–172 (SAGPGTRAN) and N291.

The protein belongs to the acetaldehyde dehydrogenase family.

It carries out the reaction acetaldehyde + NAD(+) + CoA = acetyl-CoA + NADH + H(+). This Pseudomonas putida (strain ATCC 700007 / DSM 6899 / JCM 31910 / BCRC 17059 / LMG 24140 / F1) protein is Acetaldehyde dehydrogenase 2.